A 1502-amino-acid chain; its full sequence is Gem-associated protein 5 (1502 aa).

Positions M1 to L124 are important for interaction with U1 snRNA. The interaction with U4 snRNA stretch occupies residues N13–Y15. S48 is modified (phosphoserine). 11 WD repeats span residues G62 to E104, L107 to F148, E150 to H189, G193 to V264, T280 to Y321, H333 to T374, S377 to D417, G424 to I464, Y468 to Q509, R533 to T573, and Q576 to P622. S624 bears the Phosphoserine mark. WD repeat units lie at residues G637–N677 and G680–P720. 2 disordered regions span residues K740 to V797 and S819 to L838. K754 participates in a covalent cross-link: Glycyl lysine isopeptide (Lys-Gly) (interchain with G-Cter in SUMO2). Phosphoserine is present on residues S757, S770, and S778. Positions L825–L838 are enriched in basic and acidic residues. S845 carries the phosphoserine modification. Disordered stretches follow at residues V1309–E1338 and H1378–E1427. A coiled-coil region spans residues A1355–Q1382. Polar residues predominate over residues K1380 to P1391. Residues S1392–R1407 are compositionally biased toward basic and acidic residues.

The protein belongs to the WD repeat gemin-5 family. As to quaternary structure, part of the core SMN complex that contains SMN1, GEMIN2/SIP1, DDX20/GEMIN3, GEMIN4, GEMIN5, GEMIN6, GEMIN7, GEMIN8 and STRAP/UNRIP. Part of the SMN-Sm complex that contains SMN1, GEMIN2/SIP1, DDX20/GEMIN3, GEMIN4, GEMIN5, GEMIN6, GEMIN7, GEMIN8, STRAP/UNRIP and the Sm proteins SNRPB, SNRPD1, SNRPD2, SNRPD3, SNRPE, SNRPF and SNRPG. Interacts directly with SMN1, SNRPB, SNRPD1, SNRPD2, SNRPD3 and SNRPE. Identified in a SMN complex that contains GEMIN2/SIP1. Interacts with cytosolic DDX20/GEMIN3 and GEMIN4. Interacts with SNRNP70 and HNRNPU. Identified in a complex with 80S ribosomes; binds to the 60S large ribosomal subunit. Interacts with the ribosomal subunits RPL3 and RPL4.

Its subcellular location is the nucleus. The protein localises to the nucleoplasm. The protein resides in the gem. It is found in the cytoplasm. Its function is as follows. The SMN complex catalyzes the assembly of small nuclear ribonucleoproteins (snRNPs), the building blocks of the spliceosome, and thereby plays an important role in the splicing of cellular pre-mRNAs. Most spliceosomal snRNPs contain a common set of Sm proteins SNRPB, SNRPD1, SNRPD2, SNRPD3, SNRPE, SNRPF and SNRPG that assemble in a heptameric protein ring on the Sm site of the small nuclear RNA to form the core snRNP (Sm core). In the cytosol, the Sm proteins SNRPD1, SNRPD2, SNRPE, SNRPF and SNRPG are trapped in an inactive 6S pICln-Sm complex by the chaperone CLNS1A that controls the assembly of the core snRNP. To assemble core snRNPs, the SMN complex accepts the trapped 5Sm proteins from CLNS1A forming an intermediate. Binding of snRNA inside 5Sm ultimately triggers eviction of the SMN complex, thereby allowing binding of SNRPD3 and SNRPB to complete assembly of the core snRNP. Within the SMN complex, GEMIN5 recognizes and delivers the small nuclear RNAs (snRNAs) to the SMN complex. Binds to the 7-methylguanosine cap of RNA molecules. Binds to the 3'-UTR of SMN1 mRNA and regulates its translation; does not affect mRNA stability. May play a role in the regulation of protein synthesis via its interaction with ribosomes. The protein is Gem-associated protein 5 (Gemin5) of Mus musculus (Mouse).